A 159-amino-acid polypeptide reads, in one-letter code: Heat shock protein beta-9 (159 aa).

In terms of domain architecture, sHSP spans 36-147 (LLRDSPAAQE…EAQTGPSPRL (112 aa)).

This sequence belongs to the small heat shock protein (HSP20) family. As to expression, testis specific.

It is found in the cytoplasm. The protein localises to the nucleus. The polypeptide is Heat shock protein beta-9 (HSPB9) (Homo sapiens (Human)).